Here is a 118-residue protein sequence, read N- to C-terminus: uncharacterized protein (118 aa).

This is an uncharacterized protein from Escherichia coli O157:H7.